The sequence spans 543 residues: Chaperonin GroEL (543 aa).

ATP contacts are provided by residues 29–32 (TVGP), 86–90 (DGTTT), Gly413, and Asp504.

It belongs to the chaperonin (HSP60) family. Forms a cylinder of 14 subunits composed of two heptameric rings stacked back-to-back. Interacts with the co-chaperonin GroES.

Its subcellular location is the cytoplasm. It carries out the reaction ATP + H2O + a folded polypeptide = ADP + phosphate + an unfolded polypeptide.. In terms of biological role, together with its co-chaperonin GroES, plays an essential role in assisting protein folding. The GroEL-GroES system forms a nano-cage that allows encapsulation of the non-native substrate proteins and provides a physical environment optimized to promote and accelerate protein folding. The sequence is that of Chaperonin GroEL from Mycoplasma pneumoniae (strain ATCC 29342 / M129 / Subtype 1) (Mycoplasmoides pneumoniae).